The primary structure comprises 225 residues: UPF0758 protein BAMEG_4721 (225 aa).

Residues 103 to 225 enclose the MPN domain; it reads SIRSPEDCAT…FVSLKEKGHI (123 aa). Residues H174, H176, and D187 each coordinate Zn(2+). The short motif at 174 to 187 is the JAMM motif element; the sequence is HNHPSGDPAPSRED.

This sequence belongs to the UPF0758 family.

This chain is UPF0758 protein BAMEG_4721, found in Bacillus anthracis (strain CDC 684 / NRRL 3495).